Here is a 392-residue protein sequence, read N- to C-terminus: DNA primase small subunit PriS (392 aa).

Residues Asp98, Asp100, and Asp295 contribute to the active site.

Belongs to the eukaryotic-type primase small subunit family. In terms of assembly, heterodimer of a small subunit (PriS) and a large subunit (PriL). The cofactor is Mg(2+). Mn(2+) serves as cofactor.

In terms of biological role, catalytic subunit of DNA primase, an RNA polymerase that catalyzes the synthesis of short RNA molecules used as primers for DNA polymerase during DNA replication. The small subunit contains the primase catalytic core and has DNA synthesis activity on its own. Binding to the large subunit stabilizes and modulates the activity, increasing the rate of DNA synthesis while decreasing the length of the DNA fragments, and conferring RNA synthesis capability. The DNA polymerase activity may enable DNA primase to also catalyze primer extension after primer synthesis. May also play a role in DNA repair. The protein is DNA primase small subunit PriS of Haloarcula marismortui (strain ATCC 43049 / DSM 3752 / JCM 8966 / VKM B-1809) (Halobacterium marismortui).